The primary structure comprises 244 residues: Uridylate kinase (244 aa).

Residue 17–20 (KVSG) coordinates ATP. The segment at 25–30 (GEKGFG) is involved in allosteric activation by GTP. Gly59 serves as a coordination point for UMP. 2 residues coordinate ATP: Gly60 and Arg64. Residues Asp80 and 141–148 (VGNPFFTT) each bind UMP. 4 residues coordinate ATP: Thr168, Gln169, Tyr174, and Asp177.

The protein belongs to the UMP kinase family. In terms of assembly, homohexamer.

Its subcellular location is the cytoplasm. It carries out the reaction UMP + ATP = UDP + ADP. It functions in the pathway pyrimidine metabolism; CTP biosynthesis via de novo pathway; UDP from UMP (UMPK route): step 1/1. With respect to regulation, allosterically activated by GTP. Inhibited by UTP. Catalyzes the reversible phosphorylation of UMP to UDP. This chain is Uridylate kinase, found in Ehrlichia canis (strain Jake).